Here is a 405-residue protein sequence, read N- to C-terminus: MSLYDDLGVETSDSKTEGWSKNFKLLQSQLQVKKAALTQAKSQRTKQSTVLAPVIDLKRGGSSDDRQIADTPPHVAAGLKDPVPSGFSAGEVLIPLADEYDPMFPNDYEKVVKRQREERQRQRELERQKEIEEREKRRKDRHEASGFSRRPDPDSDEDEDYERERRKRSMGGAAIAPPTSLVEKDKELPRDFPYEEDSRPRSQSSKAAIPPPVYEEPDRPRSPTGPSNSFLANMGGTVAHKIMQKYGFREGQGLGKHEQGLSTALSVEKTSKRGGKIIVGDATEKGEAQDASKKSDSNPLTEILKCPTKVVLLRNMVGAGEVDEDLEVETKEECEKYGKVGKCVIFEIPGAPDDEAVRIFLEFERVESAIKAVVDLNGRYFGGRVVKACFYNLDKFRVLDLAEQV.

N-acetylserine is present on Ser2. Phosphoserine is present on Ser2. A Glycyl lysine isopeptide (Lys-Gly) (interchain with G-Cter in SUMO2) cross-link involves residue Lys15. Lys21 carries the N6-acetyllysine modification. Residues Lys24 and Lys33 each participate in a glycyl lysine isopeptide (Lys-Gly) (interchain with G-Cter in SUMO2) cross-link. Lys41 is modified (N6-acetyllysine; alternate). Residue Lys41 forms a Glycyl lysine isopeptide (Lys-Gly) (interchain with G-Cter in SUMO2); alternate linkage. Positions 57-68 are enriched in basic and acidic residues; it reads LKRGGSSDDRQI. Disordered regions lie at residues 57 to 88 and 114 to 233; these read LKRGGSSDDRQIADTPPHVAAGLKDPVPSGFS and RQRE…FLAN. Residue Lys58 forms a Glycyl lysine isopeptide (Lys-Gly) (interchain with G-Cter in SUMO2) linkage. Thr71 carries the phosphothreonine modification. The segment covering 114-153 has biased composition (basic and acidic residues); sequence RQREERQRQRELERQKEIEEREKRRKDRHEASGFSRRPDP. Residues Ser155 and Ser169 each carry the phosphoserine modification. Residues 182 to 200 are compositionally biased toward basic and acidic residues; that stretch reads VEKDKELPRDFPYEEDSRP. Phosphoserine is present on Ser222. One can recognise a G-patch domain in the interval 235-283; that stretch reads GGTVAHKIMQKYGFREGQGLGKHEQGLSTALSVEKTSKRGGKIIVGDAT. A Phosphothreonine modification is found at Thr237. Residue Lys256 forms a Glycyl lysine isopeptide (Lys-Gly) (interchain with G-Cter in SUMO2) linkage. Phosphoserine is present on Ser266. Residue Lys276 forms a Glycyl lysine isopeptide (Lys-Gly) (interchain with G-Cter in SUMO2) linkage. A phosphoserine mark is found at Ser295 and Ser297. The 80-residue stretch at 310-389 folds into the RRM domain; sequence VVLLRNMVGA…YFGGRVVKAC (80 aa).

Binds SXL. Associates with the spliceosome. Interacts with SF3B1, SF1 and U2AF2.

The protein resides in the nucleus. Its function is as follows. Splice factor that binds to the single-stranded 3'AG at the exon/intron border and promotes its utilization in the second catalytic step. Involved in the regulation of alternative splicing and the utilization of cryptic splice sites. This chain is Splicing factor 45 (Rbm17), found in Mus musculus (Mouse).